The sequence spans 238 residues: 7-cyano-7-deazaguanine synthase (238 aa).

ATP is bound at residue 12–22; it reads FSGGQDSTTCL. Residues cysteine 191, cysteine 200, cysteine 203, and cysteine 206 each contribute to the Zn(2+) site.

Belongs to the QueC family. Zn(2+) serves as cofactor.

It carries out the reaction 7-carboxy-7-deazaguanine + NH4(+) + ATP = 7-cyano-7-deazaguanine + ADP + phosphate + H2O + H(+). It participates in purine metabolism; 7-cyano-7-deazaguanine biosynthesis. Catalyzes the ATP-dependent conversion of 7-carboxy-7-deazaguanine (CDG) to 7-cyano-7-deazaguanine (preQ(0)). This Shewanella oneidensis (strain ATCC 700550 / JCM 31522 / CIP 106686 / LMG 19005 / NCIMB 14063 / MR-1) protein is 7-cyano-7-deazaguanine synthase.